The chain runs to 908 residues: 26S proteasome non-ATPase regulatory subunit 2 (908 aa).

At methionine 1 the chain carries N-acetylmethionine. The segment at 1-51 (MEEGGRDKTPVQSQQPSATAPSGADEKSSGKERRDAGEKDKEQELSEEDKQ) is disordered. Threonine 9 carries the phosphothreonine modification. Residues 10 to 20 (PVQSQQPSATA) are compositionally biased toward polar residues. Basic and acidic residues predominate over residues 24-51 (ADEKSSGKERRDAGEKDKEQELSEEDKQ). Residues serine 29 and serine 147 each carry the phosphoserine modification. Residue tyrosine 194 is modified to Phosphotyrosine. Phosphoserine is present on residues serine 361 and serine 363. PC repeat units follow at residues 409 to 442 (SAAASLGMILLWDVDGGLTQIDKYLYSSEDYIKS), 443 to 479 (GALLACGIVNSGVRNECDPALALLSDYVLHNSNTMRL), 480 to 514 (GSIFGLGLAYAGSNREDVLTLLLPVMGDSKSSMEV), 517 to 551 (VTALACGMIAVGSCNGDVTSTILQTIMEKSETELK), and 560 to 589 (LGLGLNHLGKGEAIEAILAALEVVSEPFRS). The residue at position 551 (lysine 551) is an N6-acetyllysine. The span at 623-643 (KEKEEDKDKKEKKDKDKKEAP) shows a compositional bias: basic and acidic residues. Positions 623–645 (KEKEEDKDKKEKKDKDKKEAPAD) are disordered. 2 PC repeats span residues 692-723 (LALALISVSNPRLNILDTLSKFSHDADPEVSY) and 742-757 (AAMLRQLAQYHAKDPN). The tract at residues 708-903 (DTLSKFSHDA…LEGFVILRKN (196 aa)) is required for interaction with UBLCP1.

Belongs to the proteasome subunit S2 family. Component of the 19S proteasome regulatory particle complex. The 26S proteasome consists of a 20S core particle (CP) and two 19S regulatory subunits (RP). The regulatory particle is made of a lid composed of 9 subunits, a base containing 6 ATPases and few additional components including PSMD2. Interacts with RPGRIP1L. Interacts with CRY1 in a KDM8-dependent manner. Interacts (via C-terminus) with phosphatase UBLCP1 (via ubiquitin-like domain); the interaction recruits UBLCP1 to the 19S regulatory particle where it dephosphorylates 19S subunit PSMC2/RPT1 which impairs PSMC2 ATPase activity and disrupts 26S proteasome assembly.

Functionally, component of the 26S proteasome, a multiprotein complex involved in the ATP-dependent degradation of ubiquitinated proteins. This complex plays a key role in the maintenance of protein homeostasis by removing misfolded or damaged proteins, which could impair cellular functions, and by removing proteins whose functions are no longer required. Therefore, the proteasome participates in numerous cellular processes, including cell cycle progression, apoptosis, or DNA damage repair. In terms of biological role, binds to the intracellular domain of tumor necrosis factor type 1 receptor. The binding domain of TRAP1 and TRAP2 resides outside the death domain of TNFR1. The polypeptide is 26S proteasome non-ATPase regulatory subunit 2 (Psmd2) (Rattus norvegicus (Rat)).